An 83-amino-acid polypeptide reads, in one-letter code: Small ribosomal subunit protein uS17c (83 aa).

It belongs to the universal ribosomal protein uS17 family. As to quaternary structure, part of the 30S ribosomal subunit.

The protein localises to the plastid. It localises to the chloroplast. One of the primary rRNA binding proteins, it binds specifically to the 5'-end of 16S ribosomal RNA. The sequence is that of Small ribosomal subunit protein uS17c (rps17) from Pyropia yezoensis (Susabi-nori).